The sequence spans 30 residues: SFSVNPAVDILQHRYMEKVAQNNRNFLNRV.

Valine amide is present on V30.

This sequence belongs to the sauvagine/corticotropin-releasing factor/urotensin I family.

The protein localises to the secreted. In terms of biological role, regulation of fluid secretion. This Manduca sexta (Tobacco hawkmoth) protein is Diuretic hormone 2.